A 722-amino-acid chain; its full sequence is Zinc finger protein 600 (722 aa).

The C2H2-type 1; degenerate zinc-finger motif lies at 162-184; it reads FQCNESGKAFNCSSLLRKHQIPH. C2H2-type zinc fingers lie at residues 190–212, 218–240, 246–268, 274–296, 302–324, 330–352, 358–380, 386–408, and 414–436; these read YKCD…CRCH, YKCN…RRLH, HKCN…KAIH, YKCN…RRIH, YKCE…KRIH, YKCK…KRIH, YKCN…HRLH, YKCK…TRIH, and YKCN…KSIH. The C2H2-type 11; degenerate zinc-finger motif lies at 442–464; the sequence is YKYEECEKVFSCGSTLETHKIIH. C2H2-type zinc fingers lie at residues 470–492, 498–520, 526–548, 554–576, 582–604, 610–632, 638–660, 666–688, and 694–716; these read YKCK…TRIH, YKCN…RRVH, YKCN…RRLH, YKCT…TRIH, YKCN…HRIH, YKCE…RRIH, YKCK…TGLH, and YKCN…QAVH.

It belongs to the krueppel C2H2-type zinc-finger protein family.

The protein resides in the nucleus. May be involved in transcriptional regulation. This Homo sapiens (Human) protein is Zinc finger protein 600 (ZNF600).